The primary structure comprises 132 residues: Fluoride-specific ion channel FluC 1 (132 aa).

A run of 4 helical transmembrane segments spans residues 11–31, 37–57, 70–92, and 105–125; these read AVFA…ALAI, WPWP…YFTT, RPLL…VETI, and AYSV…TVLV. Na(+) is bound by residues Gly79 and Thr82.

The protein belongs to the fluoride channel Fluc/FEX (TC 1.A.43) family.

It localises to the cell membrane. The catalysed reaction is fluoride(in) = fluoride(out). Its activity is regulated as follows. Na(+) is not transported, but it plays an essential structural role and its presence is essential for fluoride channel function. In terms of biological role, fluoride-specific ion channel. Important for reducing fluoride concentration in the cell, thus reducing its toxicity. This is Fluoride-specific ion channel FluC 1 from Mycobacterium bovis (strain ATCC BAA-935 / AF2122/97).